The following is a 215-amino-acid chain: Cytochrome b6 (215 aa).

Residues 32-52 (IFYCFGGIVFTCFLVQVATGF) form a helical membrane-spanning segment. C35 is a binding site for heme c. Heme b contacts are provided by H86 and H100. 3 consecutive transmembrane segments (helical) span residues 90 to 110 (ASMM…TGGF), 116 to 136 (LTWV…VTGY), and 186 to 206 (AHTF…FLMI). Positions 187 and 202 each coordinate heme b.

Belongs to the cytochrome b family. PetB subfamily. The 4 large subunits of the cytochrome b6-f complex are cytochrome b6, subunit IV (17 kDa polypeptide, PetD), cytochrome f and the Rieske protein, while the 4 small subunits are PetG, PetL, PetM and PetN. The complex functions as a dimer. Requires heme b as cofactor. Heme c is required as a cofactor.

Its subcellular location is the plastid. It is found in the chloroplast thylakoid membrane. In terms of biological role, component of the cytochrome b6-f complex, which mediates electron transfer between photosystem II (PSII) and photosystem I (PSI), cyclic electron flow around PSI, and state transitions. In Trieres chinensis (Marine centric diatom), this protein is Cytochrome b6.